The primary structure comprises 580 residues: Dihydroxy-acid dehydratase (580 aa).

Position 95 (Asp95) interacts with Mg(2+). Position 136 (Cys136) interacts with [2Fe-2S] cluster. 2 residues coordinate Mg(2+): Asp137 and Lys138. Lys138 carries the post-translational modification N6-carboxylysine. Residue Cys209 coordinates [2Fe-2S] cluster. A Mg(2+)-binding site is contributed by Glu462. The Proton acceptor role is filled by Ser488.

It belongs to the IlvD/Edd family. Homodimer. [2Fe-2S] cluster serves as cofactor. It depends on Mg(2+) as a cofactor.

The enzyme catalyses (2R)-2,3-dihydroxy-3-methylbutanoate = 3-methyl-2-oxobutanoate + H2O. It carries out the reaction (2R,3R)-2,3-dihydroxy-3-methylpentanoate = (S)-3-methyl-2-oxopentanoate + H2O. The protein operates within amino-acid biosynthesis; L-isoleucine biosynthesis; L-isoleucine from 2-oxobutanoate: step 3/4. It functions in the pathway amino-acid biosynthesis; L-valine biosynthesis; L-valine from pyruvate: step 3/4. Functionally, functions in the biosynthesis of branched-chain amino acids. Catalyzes the dehydration of (2R,3R)-2,3-dihydroxy-3-methylpentanoate (2,3-dihydroxy-3-methylvalerate) into 2-oxo-3-methylpentanoate (2-oxo-3-methylvalerate) and of (2R)-2,3-dihydroxy-3-methylbutanoate (2,3-dihydroxyisovalerate) into 2-oxo-3-methylbutanoate (2-oxoisovalerate), the penultimate precursor to L-isoleucine and L-valine, respectively. The sequence is that of Dihydroxy-acid dehydratase from Leuconostoc mesenteroides subsp. mesenteroides (strain ATCC 8293 / DSM 20343 / BCRC 11652 / CCM 1803 / JCM 6124 / NCDO 523 / NBRC 100496 / NCIMB 8023 / NCTC 12954 / NRRL B-1118 / 37Y).